The primary structure comprises 289 residues: Pantothenate synthetase (289 aa).

Position 30 to 37 (30 to 37 (MGYLHKGH)) interacts with ATP. H37 (proton donor) is an active-site residue. Position 61 (Q61) interacts with (R)-pantoate. Residue Q61 coordinates beta-alanine. 147–150 (GEKD) serves as a coordination point for ATP. Q153 contributes to the (R)-pantoate binding site. ATP is bound by residues V176 and 184-187 (CSSR).

The protein belongs to the pantothenate synthetase family. In terms of assembly, homodimer.

Its subcellular location is the cytoplasm. It carries out the reaction (R)-pantoate + beta-alanine + ATP = (R)-pantothenate + AMP + diphosphate + H(+). The protein operates within cofactor biosynthesis; (R)-pantothenate biosynthesis; (R)-pantothenate from (R)-pantoate and beta-alanine: step 1/1. Functionally, catalyzes the condensation of pantoate with beta-alanine in an ATP-dependent reaction via a pantoyl-adenylate intermediate. The sequence is that of Pantothenate synthetase from Allorhizobium ampelinum (strain ATCC BAA-846 / DSM 112012 / S4) (Agrobacterium vitis (strain S4)).